The sequence spans 356 residues: Histidinol-phosphate aminotransferase (356 aa).

Lysine 214 carries the N6-(pyridoxal phosphate)lysine modification.

The protein belongs to the class-II pyridoxal-phosphate-dependent aminotransferase family. Histidinol-phosphate aminotransferase subfamily. Homodimer. It depends on pyridoxal 5'-phosphate as a cofactor.

The catalysed reaction is L-histidinol phosphate + 2-oxoglutarate = 3-(imidazol-4-yl)-2-oxopropyl phosphate + L-glutamate. Its pathway is amino-acid biosynthesis; L-histidine biosynthesis; L-histidine from 5-phospho-alpha-D-ribose 1-diphosphate: step 7/9. The polypeptide is Histidinol-phosphate aminotransferase (Shigella boydii serotype 18 (strain CDC 3083-94 / BS512)).